We begin with the raw amino-acid sequence, 574 residues long: Dihydroxy-acid dehydratase 2 (574 aa).

Residues Met-1 to Pro-20 form a disordered region. Position 56 (Cys-56) interacts with [2Fe-2S] cluster. Asp-88 contributes to the Mg(2+) binding site. Residue Cys-129 coordinates [2Fe-2S] cluster. 2 residues coordinate Mg(2+): Asp-130 and Lys-131. Residue Lys-131 is modified to N6-carboxylysine. Cys-201 is a binding site for [2Fe-2S] cluster. Residue Glu-451 participates in Mg(2+) binding. The active-site Proton acceptor is the Ser-477.

It belongs to the IlvD/Edd family. As to quaternary structure, homodimer. The cofactor is [2Fe-2S] cluster. Mg(2+) is required as a cofactor.

The catalysed reaction is (2R)-2,3-dihydroxy-3-methylbutanoate = 3-methyl-2-oxobutanoate + H2O. It catalyses the reaction (2R,3R)-2,3-dihydroxy-3-methylpentanoate = (S)-3-methyl-2-oxopentanoate + H2O. It participates in amino-acid biosynthesis; L-isoleucine biosynthesis; L-isoleucine from 2-oxobutanoate: step 3/4. The protein operates within amino-acid biosynthesis; L-valine biosynthesis; L-valine from pyruvate: step 3/4. Functions in the biosynthesis of branched-chain amino acids. Catalyzes the dehydration of (2R,3R)-2,3-dihydroxy-3-methylpentanoate (2,3-dihydroxy-3-methylvalerate) into 2-oxo-3-methylpentanoate (2-oxo-3-methylvalerate) and of (2R)-2,3-dihydroxy-3-methylbutanoate (2,3-dihydroxyisovalerate) into 2-oxo-3-methylbutanoate (2-oxoisovalerate), the penultimate precursor to L-isoleucine and L-valine, respectively. The polypeptide is Dihydroxy-acid dehydratase 2 (Bradyrhizobium diazoefficiens (strain JCM 10833 / BCRC 13528 / IAM 13628 / NBRC 14792 / USDA 110)).